A 375-amino-acid polypeptide reads, in one-letter code: Putative type I specificity subunit S.MpnORF638P (375 aa).

This sequence belongs to the type-I restriction system S methylase family. In terms of assembly, the methyltransferase is composed of M and S polypeptides.

Its function is as follows. The specificity (S) subunit of a type I methyltransferase (MTase); this subunit dictates DNA sequence specificity. The single R subunit has multiple frameshifts and is probably not expressed. The sequence is that of Putative type I specificity subunit S.MpnORF638P from Mycoplasma pneumoniae (strain ATCC 29342 / M129 / Subtype 1) (Mycoplasmoides pneumoniae).